A 304-amino-acid polypeptide reads, in one-letter code: Oxygen-dependent coproporphyrinogen-III oxidase (304 aa).

Serine 93 lines the substrate pocket. 2 residues coordinate a divalent metal cation: histidine 97 and histidine 107. Catalysis depends on histidine 107, which acts as the Proton donor. 109-111 (NVR) serves as a coordination point for substrate. The a divalent metal cation site is built by histidine 146 and histidine 176. The important for dimerization stretch occupies residues 241–276 (YVEFNLVYDRGTLFGLQSGGRTESILMSLPPQVRWG). Position 259–261 (259–261 (GGR)) interacts with substrate.

This sequence belongs to the aerobic coproporphyrinogen-III oxidase family. Homodimer. A divalent metal cation is required as a cofactor.

The protein resides in the cytoplasm. The enzyme catalyses coproporphyrinogen III + O2 + 2 H(+) = protoporphyrinogen IX + 2 CO2 + 2 H2O. The protein operates within porphyrin-containing compound metabolism; protoporphyrin-IX biosynthesis; protoporphyrinogen-IX from coproporphyrinogen-III (O2 route): step 1/1. Functionally, involved in the heme biosynthesis. Catalyzes the aerobic oxidative decarboxylation of propionate groups of rings A and B of coproporphyrinogen-III to yield the vinyl groups in protoporphyrinogen-IX. The protein is Oxygen-dependent coproporphyrinogen-III oxidase of Pseudomonas syringae pv. syringae (strain B728a).